The chain runs to 383 residues: S-adenosylmethionine synthase (383 aa).

An ATP-binding site is contributed by H15. Mg(2+) is bound at residue D17. E43 contributes to the K(+) binding site. L-methionine contacts are provided by E56 and Q99. The flexible loop stretch occupies residues 99–109 (QSPDINQGVDR). ATP-binding positions include 164 to 166 (DAK), 230 to 231 (RF), D239, 245 to 246 (RK), A262, and K266. L-methionine is bound at residue D239. K270 contacts L-methionine.

The protein belongs to the AdoMet synthase family. As to quaternary structure, homotetramer; dimer of dimers. Requires Mg(2+) as cofactor. K(+) is required as a cofactor.

It is found in the cytoplasm. It catalyses the reaction L-methionine + ATP + H2O = S-adenosyl-L-methionine + phosphate + diphosphate. The protein operates within amino-acid biosynthesis; S-adenosyl-L-methionine biosynthesis; S-adenosyl-L-methionine from L-methionine: step 1/1. Functionally, catalyzes the formation of S-adenosylmethionine (AdoMet) from methionine and ATP. The overall synthetic reaction is composed of two sequential steps, AdoMet formation and the subsequent tripolyphosphate hydrolysis which occurs prior to release of AdoMet from the enzyme. The polypeptide is S-adenosylmethionine synthase (Pseudoalteromonas translucida (strain TAC 125)).